Consider the following 502-residue polypeptide: Probable cytochrome P450 514A4 (502 aa).

The chain crosses the membrane as a helical span at residues isoleucine 4–leucine 24. Residue cysteine 448 coordinates heme.

This sequence belongs to the cytochrome P450 family. Heme is required as a cofactor.

The protein localises to the membrane. This is Probable cytochrome P450 514A4 (cyp514A4) from Dictyostelium discoideum (Social amoeba).